The sequence spans 314 residues: Elongation factor Ts (314 aa).

Residues 82–85 (TDFV) are involved in Mg(2+) ion dislocation from EF-Tu.

It belongs to the EF-Ts family.

The protein resides in the cytoplasm. Associates with the EF-Tu.GDP complex and induces the exchange of GDP to GTP. It remains bound to the aminoacyl-tRNA.EF-Tu.GTP complex up to the GTP hydrolysis stage on the ribosome. This is Elongation factor Ts from Nostoc punctiforme (strain ATCC 29133 / PCC 73102).